The chain runs to 184 residues: Large ribosomal subunit protein uL22 (184 aa).

It belongs to the universal ribosomal protein uL22 family. In terms of assembly, part of the 50S ribosomal subunit.

Functionally, this protein binds specifically to 23S rRNA. It makes multiple contacts with different domains of the 23S rRNA in the assembled 50S subunit and ribosome. Its function is as follows. The globular domain of the protein is located near the polypeptide exit tunnel on the outside of the subunit, while an extended beta-hairpin is found that lines the wall of the exit tunnel in the center of the 70S ribosome. This is Large ribosomal subunit protein uL22 from Pyrobaculum calidifontis (strain DSM 21063 / JCM 11548 / VA1).